A 304-amino-acid chain; its full sequence is Glutaminase (304 aa).

Substrate-binding residues include serine 63, asparagine 114, glutamate 158, asparagine 165, tyrosine 189, tyrosine 240, and valine 258.

The protein belongs to the glutaminase family. As to quaternary structure, homotetramer.

The catalysed reaction is L-glutamine + H2O = L-glutamate + NH4(+). This Shewanella baltica (strain OS155 / ATCC BAA-1091) protein is Glutaminase.